We begin with the raw amino-acid sequence, 209 residues long: MKNPVETYMNLVPMVVEQTNRGERAYDIFSRLLKERIIFITGPVEDGMATLVCAQLLFLEAENPKKEINLYINSPGGVVTSGMAIYDTMQFIKPAVSTLCIGQAASMGSLLLTAGHKDMRFATPNARIMVHQPSGGFQGQASDIERHAMDIVKLKRRLNEVYVKHTGKSYEEIERTLDRDHFMTADEAKDFGLIDKVISSREPAESAVA.

Residue Ser106 is the Nucleophile of the active site. His131 is a catalytic residue.

Belongs to the peptidase S14 family. As to quaternary structure, fourteen ClpP subunits assemble into 2 heptameric rings which stack back to back to give a disk-like structure with a central cavity, resembling the structure of eukaryotic proteasomes.

Its subcellular location is the cytoplasm. It catalyses the reaction Hydrolysis of proteins to small peptides in the presence of ATP and magnesium. alpha-casein is the usual test substrate. In the absence of ATP, only oligopeptides shorter than five residues are hydrolyzed (such as succinyl-Leu-Tyr-|-NHMec, and Leu-Tyr-Leu-|-Tyr-Trp, in which cleavage of the -Tyr-|-Leu- and -Tyr-|-Trp bonds also occurs).. Its function is as follows. Cleaves peptides in various proteins in a process that requires ATP hydrolysis. Has a chymotrypsin-like activity. Plays a major role in the degradation of misfolded proteins. This chain is ATP-dependent Clp protease proteolytic subunit 2, found in Mesorhizobium japonicum (strain LMG 29417 / CECT 9101 / MAFF 303099) (Mesorhizobium loti (strain MAFF 303099)).